The primary structure comprises 470 residues: NADH-quinone oxidoreductase subunit D (470 aa).

Over residues 1-18 (MTPSTSTPHTSTAPHTST) the composition is skewed to low complexity. The tract at residues 1–37 (MTPSTSTPHTSTAPHTSTGQSTDGAAQPGDGSSAYEA) is disordered.

Belongs to the complex I 49 kDa subunit family. In terms of assembly, NDH-1 is composed of 14 different subunits. Subunits NuoB, C, D, E, F, and G constitute the peripheral sector of the complex.

The protein resides in the cell membrane. The enzyme catalyses a quinone + NADH + 5 H(+)(in) = a quinol + NAD(+) + 4 H(+)(out). Its function is as follows. NDH-1 shuttles electrons from NADH, via FMN and iron-sulfur (Fe-S) centers, to quinones in the respiratory chain. The immediate electron acceptor for the enzyme in this species is believed to be a menaquinone. Couples the redox reaction to proton translocation (for every two electrons transferred, four hydrogen ions are translocated across the cytoplasmic membrane), and thus conserves the redox energy in a proton gradient. This Frankia alni (strain DSM 45986 / CECT 9034 / ACN14a) protein is NADH-quinone oxidoreductase subunit D.